The primary structure comprises 116 residues: Small ribosomal subunit protein uS13m (116 aa).

It belongs to the universal ribosomal protein uS13 family. As to quaternary structure, part of the small ribosomal subunit.

It localises to the mitochondrion. In terms of biological role, located at the top of the head of the small subunit, it contacts several helices of the 18S rRNA. The sequence is that of Small ribosomal subunit protein uS13m (RPS13) from Nicotiana tabacum (Common tobacco).